We begin with the raw amino-acid sequence, 395 residues long: Renin (395 aa).

An N-terminal signal peptide occupies residues 1–21 (MLQSWEFVLLISCFLCFSSDA). Positions 22-43 (LQRISLKKMPSIRETLQEMGMK) are cleaved as a propeptide — activation peptide. Asn64 is a glycosylation site (N-linked (GlcNAc...) asparagine). A Peptidase A1 domain is found at 79 to 392 (YYGEISIGTP…DRQNNRIGFA (314 aa)). Residue Asp97 is part of the active site. 2 disulfides stabilise this stretch: Cys110–Cys117 and Cys274–Cys278. Residue Asp283 is part of the active site. A disulfide bond links Cys316 and Cys351.

It belongs to the peptidase A1 family. N-glycosylated. Expressed by the venom gland (at protein level).

The protein resides in the secreted. It carries out the reaction Cleavage of Leu-|-Xaa bond in angiotensinogen to generate angiotensin I.. Its activity is regulated as follows. Inhibited completely by aspartyl protease inhibitor pepstatin A, but not by the serine- or metalloproteinase inhibitors PMSF or EDTA. Renin is a highly specific endopeptidase, whose only known function is to generate angiotensin I from angiotensinogen in the plasma, initiating a cascade of reactions that produce an elevation of blood pressure and increased sodium retention by the kidney. This protein is also found in snake venom and shown to specifically cleave human and porcine angiotensinogen into angiotensin I. It does not have general protease activity, no cleavage of alpha or beta casein. May be directly responsible for elevation of blood pressure in the victims of envenomation. This Echis ocellatus (Ocellated saw-scaled viper) protein is Renin.